Reading from the N-terminus, the 522-residue chain is Target of rapamycin complex 2 subunit MAPKAP1 (522 aa).

Ala2 carries the post-translational modification N-acetylalanine. The tract at residues 2–184 (AFLDNPTIIL…KKIDVYLPLH (183 aa)) is interaction with MAP3K2. The segment at 2–267 (AFLDNPTIIL…GFSTLALVEK (266 aa)) is interaction with NBN. The interval 38 to 59 (LEKTHPPSVPGDSGSEVQGSSG) is disordered. The residue at position 86 (Thr86) is a Phosphothreonine; by PKB/AKT1 and RPS6KB1. Ser128 carries the post-translational modification Phosphoserine; by PKC. One can recognise a CRIM domain in the interval 139–267 (QSILSVRLEQ…GFSTLALVEK (129 aa)). Ser186, Ser315, and Ser356 each carry phosphoserine. The interval 279-353 (LFVRINAAHG…QNAWEFCLVR (75 aa)) is SIN1-type RBD. The SIN1-type PH domain occupies 382-487 (HYKSFKVSMI…IVLKVNYILE (106 aa)). Residue Arg393 participates in a 1,2-diacyl-sn-glycero-3-phospho-(1D-myo-inositol-3,4,5-trisphosphate) binding. At Thr398 the chain carries Phosphothreonine; by RPS6KB1. 2 residues coordinate a 1,2-diacyl-sn-glycero-3-phospho-(1D-myo-inositol-3,4,5-trisphosphate): Lys428 and Lys464. The interval 468–522 (FESDAATVSEIVLKVNYILESRASTARADYLAQKQRKLNRRTSFSFQKEKKSGQQ) is interaction with ATF2. Ser510 carries the post-translational modification Phosphoserine.

This sequence belongs to the SIN1 family. As to quaternary structure, component of the mechanistic target of rapamycin complex 2 (mTORC2), consisting in two heterotretramers composed of MTOR, MLST8, RICTOR and MAPKAP1/SIN1. The mTORC2 core complex associates with PRR5/PROTOR1 and/or PRR5L/PROTOR2. Contrary to mTORC1, mTORC2 does not bind to and is not sensitive to FKBP12-rapamycin. Interacts with MAP3K2. Interacts with ATF2. Interacts with MAPK8. Interacts with GTP-bound HRAS and KRAS; inhibiting their activity. Interacts with IFNAR2. In terms of processing, phosphorylation at Ser-128 by PKC promotes relocalization to the perinuclear region, where the mTORC2 complex specifically mediates phosphorylation of SGK1. Phosphorylated at Thr-86 by AKT1 or RPS6KB1 in the presence of growth factors; the effect of this phosphorylation is however unclear. According to two studies, phosphorylation at Thr-86 by AKT1 is part of a positive feedback loop that increases mTORC2 activation. According to another study, phosphorylation at Thr-86 and Thr-398 by RPS6KB1 promotes dissociation from the mTORC2 complex, leading to inhibit mTORC2 signaling. Uniquitously expressed, with highest levels in testis, kidney and liver. Present in renal tubule cells (at protein level).

The protein localises to the cell membrane. The protein resides in the endoplasmic reticulum membrane. It is found in the early endosome membrane. Its subcellular location is the late endosome membrane. It localises to the lysosome membrane. The protein localises to the golgi apparatus membrane. The protein resides in the mitochondrion outer membrane. It is found in the cytoplasm. Its subcellular location is the perinuclear region. It localises to the nucleus. Phosphatidylinositol 3,4,5-trisphosphate (PI(3,4,5)P3) promotes MTOR activation by relieving MAPKAP1/SIN1-mediated inhibition of MTOR that takes place in absence of PI(3,4,5)P3. Functionally, component of the mechanistic target of rapamycin complex 2 (mTORC2), which transduces signals from growth factors to pathways involved in proliferation, cytoskeletal organization, lipogenesis and anabolic output. In response to growth factors, mTORC2 phosphorylates and activates AGC protein kinase family members, including AKT (AKT1, AKT2 and AKT3), PKC (PRKCA, PRKCB and PRKCE) and SGK1. In contrast to mTORC1, mTORC2 is nutrient-insensitive. Within the mTORC2 complex, MAPKAP1/SIN1 acts as a substrate adapter which recognizes and binds AGC protein kinase family members for phosphorylation by MTOR. mTORC2 plays a critical role in AKT1 activation by mediating phosphorylation of different sites depending on the context, such as 'Thr-450', 'Ser-473', 'Ser-477' or 'Thr-479', facilitating the phosphorylation of the activation loop of AKT1 on 'Thr-308' by PDPK1/PDK1 which is a prerequisite for full activation. mTORC2 catalyzes the phosphorylation of SGK1 at 'Ser-422' and of PRKCA on 'Ser-657'. The mTORC2 complex also phosphorylates various proteins involved in insulin signaling, such as FBXW8 and IGF2BP1. mTORC2 acts upstream of Rho GTPases to regulate the actin cytoskeleton, probably by activating one or more Rho-type guanine nucleotide exchange factors. mTORC2 promotes the serum-induced formation of stress-fibers or F-actin. MAPKAP1 inhibits MAP3K2 by preventing its dimerization and autophosphorylation. Inhibits HRAS and KRAS independently of mTORC2 complex. Enhances osmotic stress-induced phosphorylation of ATF2 and ATF2-mediated transcription. Involved in ciliogenesis, regulates cilia length through its interaction with CCDC28B independently of mTORC2 complex. This Mus musculus (Mouse) protein is Target of rapamycin complex 2 subunit MAPKAP1.